The sequence spans 110 residues: U1-lycotoxin-Ls1bb (110 aa).

A signal peptide spans 1–20 (MKFVLLFGVLLVTLFSYSSA). A propeptide spanning residues 21–44 (EMLDDFDQADEDELLSLIEKEEAR) is cleaved from the precursor. 4 disulfides stabilise this stretch: Cys-47–Cys-62, Cys-54–Cys-71, Cys-61–Cys-89, and Cys-73–Cys-87.

It belongs to the neurotoxin 19 (CSTX) family. 03 subfamily. As to expression, expressed by the venom gland.

It is found in the secreted. This Lycosa singoriensis (Wolf spider) protein is U1-lycotoxin-Ls1bb.